The chain runs to 1394 residues: ATP-dependent permease AUS1 (1394 aa).

The Cytoplasmic segment spans residues 1–420 (MSISKYFTPV…PLTTIGSYSR (420 aa)). Residues 33-273 (KKSYDAEDSM…FRDTLGIEKD (241 aa)) form the ABC transporter 1 domain. 6 consecutive transmembrane segments (helical) span residues 421–443 (GSLT…PIAF), 468–490 (TVFD…YFLA), 497–519 (ARFF…LFAL), 529–551 (VANL…VIYL), 558–575 (FVWI…EAIL), and 636–658 (VWRN…LFAS). Topologically, residues 659 to 1080 (QYIKPYFNKD…QYICTKRDMT (422 aa)) are cytoplasmic. The ABC transporter 2 domain maps to 751 to 978 (ISWKNINYTV…YFMSHDNTLV (228 aa)). ATP is bound at residue 782–789 (GESGAGKT). 6 helical membrane-spanning segments follow: residues 1081 to 1103 (YVMA…FWHI), 1107 to 1129 (IIGL…PLIN), 1156 to 1178 (VLLL…LFFV), 1193 to 1215 (AGVF…LWLI), 1224 to 1246 (AAVF…QPYS), and 1346 to 1368 (FGIE…YLTY). At 1369-1394 (VARIWPKVFKIITKVIPHRGKKPVQN) the chain is on the cytoplasmic side.

Belongs to the ABC transporter superfamily. ABCG family. PDR (TC 3.A.1.205) subfamily.

The protein localises to the membrane. Transporter involved in the uptake of sterol. In Saccharomyces cerevisiae (strain ATCC 204508 / S288c) (Baker's yeast), this protein is ATP-dependent permease AUS1 (AUS1).